The following is a 492-amino-acid chain: Aspartyl/glutamyl-tRNA(Asn/Gln) amidotransferase subunit B (492 aa).

It belongs to the GatB/GatE family. GatB subfamily. As to quaternary structure, heterotrimer of A, B and C subunits.

It catalyses the reaction L-glutamyl-tRNA(Gln) + L-glutamine + ATP + H2O = L-glutaminyl-tRNA(Gln) + L-glutamate + ADP + phosphate + H(+). It carries out the reaction L-aspartyl-tRNA(Asn) + L-glutamine + ATP + H2O = L-asparaginyl-tRNA(Asn) + L-glutamate + ADP + phosphate + 2 H(+). Allows the formation of correctly charged Asn-tRNA(Asn) or Gln-tRNA(Gln) through the transamidation of misacylated Asp-tRNA(Asn) or Glu-tRNA(Gln) in organisms which lack either or both of asparaginyl-tRNA or glutaminyl-tRNA synthetases. The reaction takes place in the presence of glutamine and ATP through an activated phospho-Asp-tRNA(Asn) or phospho-Glu-tRNA(Gln). The chain is Aspartyl/glutamyl-tRNA(Asn/Gln) amidotransferase subunit B from Dehalococcoides mccartyi (strain CBDB1).